The sequence spans 733 residues: Envelope glycoprotein H (733 aa).

The signal sequence occupies residues Met1–Ala14. The Virion surface portion of the chain corresponds to Ile15–Ile707. N-linked (GlcNAc...) asparagine; by host glycans are attached at residues Asn78 and Asn119. The tract at residues Gly185–Leu249 is interaction with gL. N-linked (GlcNAc...) asparagine; by host glycans are attached at residues Asn266, Asn431, Asn561, Asn573, Asn612, Asn627, and Asn689. Residues Ile708–Met728 form a helical membrane-spanning segment. Residues Tyr729 to Lys733 lie on the Intravirion side of the membrane.

The protein belongs to the herpesviridae glycoprotein H family. In terms of assembly, interacts with glycoprotein L (gL); this interaction is necessary for the correct processing and cell surface expression of gH. The heterodimer gH/gL seems to interact with gB trimers during fusion. In terms of processing, N-glycosylated, O-glycosylated, and sialylated.

The protein resides in the virion membrane. Its subcellular location is the host cell membrane. The protein localises to the host endosome membrane. The heterodimer glycoprotein H-glycoprotein L is required for the fusion of viral and plasma membranes leading to virus entry into the host cell. Following initial binding to host receptor, membrane fusion is mediated by the fusion machinery composed of gB and the heterodimer gH/gL. May also be involved in the fusion between the virion envelope and the outer nuclear membrane during virion morphogenesis. The sequence is that of Envelope glycoprotein H from Alcelaphine herpesvirus 1 (strain C500) (AlHV-1).